Consider the following 109-residue polypeptide: Iron-sulfur assembly protein IscA-like 3, mitochondrial (109 aa).

Residues 1–18 (MRKQVLALSDTAAARIRQ) constitute a mitochondrion transit peptide. Fe cation contacts are provided by cysteine 37, cysteine 100, and cysteine 102.

It belongs to the HesB/IscA family. Homodimer; may form tetramers and higher multimers. Fe cation is required as a cofactor.

It localises to the mitochondrion. Involved in the assembly of mitochondrial iron-sulfur proteins. Probably involved in the binding of an intermediate of Fe/S cluster assembly. The chain is Iron-sulfur assembly protein IscA-like 3, mitochondrial from Arabidopsis thaliana (Mouse-ear cress).